The primary structure comprises 181 residues: Probable mitochondrial import inner membrane translocase subunit tim-17B.1 (181 aa).

3 consecutive transmembrane segments (helical) span residues 17-37, 61-81, and 109-129; these read IGSA…FGGY, GVQF…LVAI, and VMAG…GVGL. The disordered stretch occupies residues 137-181; it reads AMMDPTQPPPEALDDPRSLGQKSQAEPGLDQTRPFGIPTGLPNLS.

The protein belongs to the Tim17/Tim22/Tim23 family.

The protein localises to the mitochondrion inner membrane. In terms of biological role, essential component of the TIM23 complex, a complex that mediates the translocation of transit peptide-containing proteins across the mitochondrial inner membrane. This chain is Probable mitochondrial import inner membrane translocase subunit tim-17B.1, found in Caenorhabditis elegans.